We begin with the raw amino-acid sequence, 186 residues long: NADH-dependent FMN reductase SfnE (186 aa).

This sequence belongs to the SsuE family.

It catalyses the reaction FMNH2 + NAD(+) = FMN + NADH + 2 H(+). Its function is as follows. Involved in the dimethyl sulfide degradation pathway. Catalyzes the NADH-dependent reduction of FMN. The protein is NADH-dependent FMN reductase SfnE of Pseudomonas putida (Arthrobacter siderocapsulatus).